The primary structure comprises 331 residues: Hydroxyacylglutathione hydrolase 1, mitochondrial (331 aa).

The N-terminal 76 residues, 1–76 (MPVISKASST…HFCSISNMPS (76 aa)), are a transit peptide targeting the mitochondrion. 2 residues coordinate Zn(2+): H131 and H133. Residues D135 and H136 each contribute to the Fe cation site. H189 and D208 together coordinate Zn(2+). Position 208 (D208) interacts with Fe cation. 246–248 (REN) lines the substrate pocket.

This sequence belongs to the metallo-beta-lactamase superfamily. Glyoxalase II family. Fe(2+) serves as cofactor. Fe(3+) is required as a cofactor. Requires Zn(2+) as cofactor. As to expression, mainly expressed in roots, flowers and flower buds. Also detected in leaves.

The protein localises to the mitochondrion. The enzyme catalyses an S-(2-hydroxyacyl)glutathione + H2O = a 2-hydroxy carboxylate + glutathione + H(+). Its pathway is secondary metabolite metabolism; methylglyoxal degradation; (R)-lactate from methylglyoxal: step 2/2. Its function is as follows. Thiolesterase that catalyzes the hydrolysis of S-D-lactoyl-glutathione to form glutathione and D-lactic acid. This chain is Hydroxyacylglutathione hydrolase 1, mitochondrial (GLX2-1), found in Arabidopsis thaliana (Mouse-ear cress).